The sequence spans 212 residues: Large ribosomal subunit protein uL3 (212 aa).

The segment at 117-142 (TSKGKGFQGNIKRHNQSRGPMTHGSR) is disordered.

Belongs to the universal ribosomal protein uL3 family. As to quaternary structure, part of the 50S ribosomal subunit. Forms a cluster with proteins L14 and L19.

Its function is as follows. One of the primary rRNA binding proteins, it binds directly near the 3'-end of the 23S rRNA, where it nucleates assembly of the 50S subunit. In Acholeplasma laidlawii (strain PG-8A), this protein is Large ribosomal subunit protein uL3.